Here is a 289-residue protein sequence, read N- to C-terminus: ATP phosphoribosyltransferase (289 aa).

It belongs to the ATP phosphoribosyltransferase family. Long subfamily. The cofactor is Mg(2+).

It localises to the cytoplasm. It carries out the reaction 1-(5-phospho-beta-D-ribosyl)-ATP + diphosphate = 5-phospho-alpha-D-ribose 1-diphosphate + ATP. It participates in amino-acid biosynthesis; L-histidine biosynthesis; L-histidine from 5-phospho-alpha-D-ribose 1-diphosphate: step 1/9. Its activity is regulated as follows. Feedback inhibited by histidine. In terms of biological role, catalyzes the condensation of ATP and 5-phosphoribose 1-diphosphate to form N'-(5'-phosphoribosyl)-ATP (PR-ATP). Has a crucial role in the pathway because the rate of histidine biosynthesis seems to be controlled primarily by regulation of HisG enzymatic activity. The protein is ATP phosphoribosyltransferase of Pelotomaculum thermopropionicum (strain DSM 13744 / JCM 10971 / SI).